Consider the following 975-residue polypeptide: E3 ubiquitin-protein ligase BRE1A (975 aa).

A disordered region spans residues 1-37 (MSGIGSKRAAGEPGTSVPPEKKTAVEDSGTTVETIKL). K21 carries the N6-acetyllysine modification. S41 carries the phosphoserine modification. The stretch at 43–90 (TEELDIRTLQTKNRKLAEMLDQRQAIEDELREHIEKLERRQATDDASL) forms a coiled coil. The interval 125-155 (KALVVPEPEPDSDSNQERKDDRERGEGQEPA) is disordered. A phosphoserine mark is found at S136 and S138. Residues 139–151 (NQERKDDRERGEG) show a composition bias toward basic and acidic residues. Coiled coils occupy residues 168–375 (EEME…EEVV) and 429–898 (SLHK…TTKK). N6-acetyllysine occurs at positions 348 and 510. Positions 507–622 (DLNKTRLRSG…GKHDDGRKKE (116 aa)) are disordered. Phosphoserine is present on S522. Basic and acidic residues predominate over residues 527-540 (EDPKDEPAELKQDS). Positions 543-552 (LATQSAASKA) are enriched in polar residues. Positions 558 to 622 (NEIKSKRDEE…GKHDDGRKKE (65 aa)) are enriched in basic and acidic residues. S562 is subject to Phosphoserine. The segment at 922 to 961 (CPCCNMRKKDAVLTKCFHVFCFECVKTRYDTRQRKCPKCN) adopts an RING-type zinc-finger fold.

The protein belongs to the BRE1 family. As to quaternary structure, component of the RNF20/40 complex (also known as BRE1 complex) probably composed of 2 copies of RNF20/BRE1A and 2 copies of RNF40/BRE1B. Interacts with UBE2E1/UBCH6. Interacts with p53/TP53 and WAC. Interacts with PAF1; the interaction mediates the association of the PAF1 and RNF20/40 complexes which is a prerequsite for recruitment of UBE2A/B. Interacts with PA2G4. Interacts with FBXL19.

Its subcellular location is the nucleus. The enzyme catalyses S-ubiquitinyl-[E2 ubiquitin-conjugating enzyme]-L-cysteine + [acceptor protein]-L-lysine = [E2 ubiquitin-conjugating enzyme]-L-cysteine + N(6)-ubiquitinyl-[acceptor protein]-L-lysine.. Its pathway is protein modification; protein ubiquitination. In terms of biological role, component of the RNF20/40 E3 ubiquitin-protein ligase complex that mediates monoubiquitination of 'Lys-120' of histone H2B (H2BK120ub1). H2BK120ub1 gives a specific tag for epigenetic transcriptional activation and is also prerequisite for histone H3 'Lys-4' and 'Lys-79' methylation (H3K4me and H3K79me, respectively). It thereby plays a central role in histone code and gene regulation. The RNF20/40 complex forms a H2B ubiquitin ligase complex in cooperation with the E2 enzyme UBE2A or UBE2B; reports about the cooperation with UBE2E1/UBCH are contradictory. Required for transcriptional activation of Hox genes. Recruited to the MDM2 promoter, probably by being recruited by p53/TP53, and thereby acts as a transcriptional coactivator. Mediates the polyubiquitination of PA2G4 leading to its proteasome-mediated degradation. The protein is E3 ubiquitin-protein ligase BRE1A (RNF20) of Bos taurus (Bovine).